The primary structure comprises 1454 residues: Serine/threonine-protein kinase VPS15 (1454 aa).

Gly2 carries N-myristoyl glycine lipidation. Residues 27 to 300 enclose the Protein kinase domain; the sequence is VHYVSQLNSS…LLNKYRGIFF (274 aa). ATP is bound by residues 33–41 and Lys54; that span reads LNSSRFLKT. Asp147 acts as the Proton acceptor in catalysis. HEAT repeat units lie at residues 460-497, 576-613, 615-652, and 654-691; these read NKID…SVRK, KLIQ…FFGR, RTND…LLGT, and TLEQ…TGLI. WD repeat units lie at residues 1078-1118, 1126-1165, 1229-1268, 1275-1315, 1344-1382, and 1422-1454; these read NEPN…VGEV, DCSS…QESE, PRHG…LIRS, APIT…CQYA, RSLN…SSKA, and YHHD…GIFQ.

It belongs to the protein kinase superfamily. Ser/Thr protein kinase family. Component of the autophagy-specific VPS34 PI3-kinase complex I composed of VPS15, VPS30, VPS34, ATG14 and ATG38; and of the VPS34 PI3-kinase complex II composed of VPS15, VPS30, VPS34 and VPS38. Interacts directly with ATG14 and GPA1. Interacts directly with VPS34. Post-translationally, autophosphorylated.

The protein localises to the golgi apparatus. It localises to the trans-Golgi network membrane. Its subcellular location is the endosome membrane. It carries out the reaction L-seryl-[protein] + ATP = O-phospho-L-seryl-[protein] + ADP + H(+). The catalysed reaction is L-threonyl-[protein] + ATP = O-phospho-L-threonyl-[protein] + ADP + H(+). In terms of biological role, serine/threonine-protein kinase required for cytoplasm to vacuole transport (Cvt) and autophagy as a part of the autophagy-specific VPS34 PI3-kinase complex I. This complex is essential to recruit the ATG8-phosphatidylinositol conjugate and the ATG12-ATG5 conjugate to the pre-autophagosomal structure. Is also involved in endosome-to-Golgi retrograde transport as part of the VPS34 PI3-kinase complex II. This second complex is required for the endosome-to-Golgi retrieval of PEP1 and KEX2, and the recruitment of VPS5 and VPS7, two components of the retromer complex, to endosomal membranes (probably through the synthesis of a specific pool of phosphatidylinositol 3-phosphate recruiting the retromer to the endosomes). By regulating VPS34 kinase activity, VPS15 appears to be essential for the efficient delivery of soluble hydrolases to the yeast vacuole. May function as a G protein beta subunit to propagate the pheromone response at the endosome with GPA1. This is Serine/threonine-protein kinase VPS15 from Saccharomyces cerevisiae (strain ATCC 204508 / S288c) (Baker's yeast).